The chain runs to 381 residues: Neuropeptide Y receptor type 2 (381 aa).

Positions 1–35 (MGPIGTEADENQTVEEMKVEQYGPQTTPRGELVPD) are disordered. At 1 to 51 (MGPIGTEADENQTVEEMKVEQYGPQTTPRGELVPDPEPELIDSTKLIEVQV) the chain is on the extracellular side. Asn11 carries N-linked (GlcNAc...) asparagine glycosylation. A helical membrane pass occupies residues 52-72 (VLILAYCSIILLGVIGNSLVI). Topologically, residues 73–86 (HVVIKFKSMRTVTN) are cytoplasmic. The chain crosses the membrane as a helical span at residues 87 to 107 (FFIANLAVADLVVNTLCLPFT). At 108–124 (LTYTLMGEWKMGPVLCH) the chain is on the extracellular side. Cys123 and Cys203 form a disulfide bridge. Residues 125 to 145 (LVPYAQGLAVQVSTITLTVIA) traverse the membrane as a helical segment. Residues 146-165 (LDRHRCIVYHLESKISKRIS) lie on the Cytoplasmic side of the membrane. A helical transmembrane segment spans residues 166-186 (FLIIGLAWGISALLASPLAIF). The Extracellular segment spans residues 187 to 216 (REYSLIEIIPDFEIVACTEKWPGEEKSIYG). The chain crosses the membrane as a helical span at residues 217–237 (TVYSLSSLLILYVLPLGIISF). Residues 238–268 (SYTRIWSKLKSHVSPGAANDHYHQRRQKTTK) lie on the Cytoplasmic side of the membrane. The helical transmembrane segment at 269–289 (MLVCVVVVFAVSWLPLHAFQL) threads the bilayer. The Extracellular segment spans residues 290–304 (AVDIDSHVLDLKEYK). The helical transmembrane segment at 305-325 (LIFTVFHIIAMCSTFANPLLY) threads the bilayer. Residues 326–381 (GWMNSNYRKAFLSAFRCEQRLDAIHSEVSVTFKAKKNLEVRKNSGPNDSFTEATNV) are Cytoplasmic-facing. The S-palmitoyl cysteine moiety is linked to residue Cys342.

Belongs to the G-protein coupled receptor 1 family.

It localises to the cell membrane. In terms of biological role, receptor for neuropeptide Y and peptide YY. The chain is Neuropeptide Y receptor type 2 (NPY2R) from Macaca mulatta (Rhesus macaque).